Consider the following 310-residue polypeptide: Mitogen-activated protein kinase kinase 9 (310 aa).

Residues 47–306 enclose the Protein kinase domain; it reads LEKLNVLGCG…APQLLAHPFL (260 aa). Residues 53 to 61 and Lys-76 contribute to the ATP site; that span reads LGCGNGGIV. Catalysis depends on Asp-167, which acts as the Proton acceptor. Residues Ser-195 and Ser-201 each carry the phosphoserine modification. Phosphothreonine is present on Thr-205.

This sequence belongs to the protein kinase superfamily. STE Ser/Thr protein kinase family. MAP kinase kinase subfamily. In terms of processing, phosphorylation at Ser-195 and Ser-201 by MAP kinase kinase kinases positively regulates kinase activity. Autophosphorylated.

The protein localises to the cytoplasm. The protein resides in the nucleus. It carries out the reaction L-seryl-[protein] + ATP = O-phospho-L-seryl-[protein] + ADP + H(+). The catalysed reaction is L-threonyl-[protein] + ATP = O-phospho-L-threonyl-[protein] + ADP + H(+). The enzyme catalyses L-tyrosyl-[protein] + ATP = O-phospho-L-tyrosyl-[protein] + ADP + H(+). MKK9-MPK3/MPK6 module phosphorylates and activates EIN3, leading to the promotion of EIN3-mediated transcription in ethylene signaling. Autophosphorylates and also phosphorylates MPK3 and MPK6. Plays an important role in ethylene and camalexin biosynthesis and in salt stress response. MKK9-MPK6 module positively regulates leaf senescence. The polypeptide is Mitogen-activated protein kinase kinase 9 (MKK9) (Arabidopsis thaliana (Mouse-ear cress)).